A 428-amino-acid polypeptide reads, in one-letter code: Magnesium transporter MRS2-C (428 aa).

The next 2 membrane-spanning stretches (helical) occupy residues 364–384 (LLLT…GVFG) and 400–420 (WTLV…IWYF). Positions 384 to 386 (GMN) match the Required for magnesium transport activity motif.

It belongs to the CorA metal ion transporter (MIT) (TC 1.A.35.5) family.

It localises to the membrane. Its function is as follows. Magnesium transporter that may mediate the influx of magnesium. This Oryza sativa subsp. indica (Rice) protein is Magnesium transporter MRS2-C.